We begin with the raw amino-acid sequence, 315 residues long: Coproporphyrin III ferrochelatase (315 aa).

Residues Tyr13, Arg30, 46 to 47 (RY), Ser54, and Tyr125 contribute to the Fe-coproporphyrin III site. Fe(2+) contacts are provided by His183 and Glu264.

This sequence belongs to the ferrochelatase family.

Its subcellular location is the cytoplasm. It catalyses the reaction Fe-coproporphyrin III + 2 H(+) = coproporphyrin III + Fe(2+). Its pathway is porphyrin-containing compound metabolism; protoheme biosynthesis. Functionally, involved in coproporphyrin-dependent heme b biosynthesis. Catalyzes the insertion of ferrous iron into coproporphyrin III to form Fe-coproporphyrin III. In Anoxybacillus flavithermus (strain DSM 21510 / WK1), this protein is Coproporphyrin III ferrochelatase.